Consider the following 2022-residue polypeptide: Transient receptor potential cation channel subfamily M member 6 (2022 aa).

The Cytoplasmic portion of the chain corresponds to 1-741; sequence MKEQPVLERL…MWMGRLKMRK (741 aa). Residues 742 to 762 form a helical membrane-spanning segment; sequence NSWLKIIISIILPPTILTLEF. Over 763 to 841 the chain is Extracellular; sequence KSKAEMSHVP…YEFYSAPIVK (79 aa). Residues 842–862 form a helical membrane-spanning segment; sequence FWFYTMAYLAFLMLFTYTVLV. Residues 863–905 are Cytoplasmic-facing; that stretch reads EMQPQPSVQEWLVSIYIFTNAIEVVREICISEPGKFTQKVKVW. A helical membrane pass occupies residues 906–926; the sequence is ISEYWNLTETVAIGLFSAGFV. Topologically, residues 927–939 are extracellular; it reads LRWGDPPFHTAGR. Residues 940–960 form a helical membrane-spanning segment; the sequence is LIYCIDIIFWFSRLLDFFAVN. At 961–972 the chain is on the cytoplasmic side; sequence QHAGPYVTMIAK. The helical transmembrane segment at 973–993 threads the bilayer; that stretch reads MTANMFYIVIIMAIVLLSFGV. The Extracellular segment spans residues 994–1012; it reads ARKAILSPKEPPSWSLARD. An intramembrane region (pore-forming) is located at residues 1013 to 1033; that stretch reads IVFEPYWMIYGEVYAGEIDVC. The Extracellular portion of the chain corresponds to 1034-1047; the sequence is SSQPSCPPGSFLTP. Residues 1048–1068 traverse the membrane as a helical segment; it reads FLQAVYLFVQYIIMVNLLIAF. Residues 1069-2022 lie on the Cytoplasmic side of the membrane; the sequence is FNNVYLDMES…RNSPEDDMQL (954 aa). The interval 1479 to 1516 is disordered; the sequence is TCDSDSSRSEQHQKQAQDSSLSDNSTRSAQSSECSEVG. Residues 1483-1493 show a composition bias toward basic and acidic residues; sequence DSSRSEQHQKQ. Polar residues predominate over residues 1494-1512; sequence AQDSSLSDNSTRSAQSSEC. Residues 1750 to 1980 form the Alpha-type protein kinase domain; the sequence is NLDKSMSSWS…CCRKLKLPDL (231 aa). ADP contacts are provided by G1777, G1778, L1779, R1780, and K1804. T1851 bears the Phosphothreonine; by autocatalysis mark. Residues E1876 and M1879 each contribute to the ADP site. Position 1909 (H1909) interacts with Zn(2+). D1923 acts as the Proton acceptor in catalysis. D1933 contacts ADP. Zn(2+) is bound by residues H1966, C1968, and C1972. Positions 1997 to 2022 are disordered; it reads EIKIESAEEPPARETGRNSPEDDMQL. The span at 1998-2016 shows a compositional bias: basic and acidic residues; sequence IKIESAEEPPARETGRNSP.

In the C-terminal section; belongs to the protein kinase superfamily. Alpha-type protein kinase family. ALPK subfamily. It in the N-terminal section; belongs to the transient receptor (TC 1.A.4) family. LTrpC subfamily. TRPM6 sub-subfamily. As to quaternary structure, homomers. Forms heteromers with TRPM7; TRPM6 increases the current amplitude of TRPM6/7 heteromers as compared to TRPM7 homomer. Interacts (via kinase domain) with RACK1. Autophosphorylated; autophosphorylation controlls the protein kinase activity of TRPM6 towards their substrates. Autophosphorylation of Thr-1851 in the kinase domain is essential for the inhibitory effect of RACK1. In terms of processing, the C-terminus of TRPM6 is proteolytically cleaved in vivo, in a cell type-specific fashion, releasing the kinase module from the transmembrane domain. The cleaved kinase fragments are translocated to the nucleus to phosphorylate histones and regulate gene expression. In terms of tissue distribution, highly expressed in kidney and colon. Isoform TRPM6a and isoform TRPM6b, are coexpressed with TRPM7 in kidney, and testis, and are also found in several cell lines of lung origin. Isoform TRPM6c is detected only in testis and in NCI-H510A small cell lung carcinoma cells.

It localises to the cell membrane. It is found in the apical cell membrane. The protein localises to the nucleus. It catalyses the reaction L-seryl-[protein] + ATP = O-phospho-L-seryl-[protein] + ADP + H(+). The catalysed reaction is L-threonyl-[protein] + ATP = O-phospho-L-threonyl-[protein] + ADP + H(+). It carries out the reaction Mg(2+)(in) = Mg(2+)(out). The enzyme catalyses Ca(2+)(in) = Ca(2+)(out). It catalyses the reaction Zn(2+)(in) = Zn(2+)(out). With respect to regulation, strongly inhibited by intracellular Mg(2+); unlikely to be active at physiological levels of intracellular Mg(2+). In the heteromeric TRPM6-TRPM7 channels complexes, TRPM7 are able to offset the very high sensitivity of TRPM6 to cytosolic Mg(2+) to physiologically relevant concentrations, whereas TRPM6 relieve TRPM7 from the inhibitory action of Mg-ATP. Consequently, the association of TRPM6 with TRPM7 allow for high constitutive activity of TRPM6/7 in the presence of physiological levels of Mg(2+) and Mg-ATP. The kinase activity is controlled through the autophosphorylation of a serine/threonine-rich region located to the N-terminal of the catalytic domain. In terms of biological role, bifunctional protein that combines an ion channel with an intrinsic kinase domain, enabling it to modulate cellular functions either by conducting ions through the pore or by phosphorylating downstream proteins via its kinase domain. Crucial for Mg(2+) homeostasis. Has an important role in epithelial Mg(2+) transport and in the active Mg(2+) absorption in the gut and kidney. However, whether TRPM6 forms functional homomeric channels by itself or functions primarily as a subunit of heteromeric TRPM6-TRPM7 channels, is still under debate. The C-terminal kinase domain can be cleaved from the channel segment in a cell-type-specific fashion. The cleaved kinase fragments can translocate to the nucleus, and bind chromatin-remodeling complex proteins to ultimately phosphorylate specific Ser/Thr residues of histones known to be functionally important for cell differentiation and development. This Homo sapiens (Human) protein is Transient receptor potential cation channel subfamily M member 6 (TRPM6).